The following is a 607-amino-acid chain: Elongation factor 4 (607 aa).

The region spanning 11 to 193 (SKIRNFSIIA…QIVEKVPAPT (183 aa)) is the tr-type G domain. Residues 23–28 (DHGKST) and 140–143 (NKID) each bind GTP.

Belongs to the TRAFAC class translation factor GTPase superfamily. Classic translation factor GTPase family. LepA subfamily.

The protein localises to the cell membrane. The enzyme catalyses GTP + H2O = GDP + phosphate + H(+). Functionally, required for accurate and efficient protein synthesis under certain stress conditions. May act as a fidelity factor of the translation reaction, by catalyzing a one-codon backward translocation of tRNAs on improperly translocated ribosomes. Back-translocation proceeds from a post-translocation (POST) complex to a pre-translocation (PRE) complex, thus giving elongation factor G a second chance to translocate the tRNAs correctly. Binds to ribosomes in a GTP-dependent manner. The sequence is that of Elongation factor 4 from Bacillus cereus (strain ATCC 10987 / NRS 248).